Here is a 2138-residue protein sequence, read N- to C-terminus: Protein virilizer homolog (2138 aa).

Disordered regions lie at residues 1503–1574, 1638–1664, 1855–1881, 2013–2035, and 2058–2094; these read RLPQ…SMHV, NPTP…DDLQ, PVIP…SSGG, PMQP…QGVS, and YYHP…QESG. Over residues 1528–1541 the composition is skewed to polar residues; it reads ENSSVDIPTQNSIQ. Polar residues-rich tracts occupy residues 1862-1881 and 2025-2035; these read DSLS…SSGG and QISQPSEQGVS.

It belongs to the vir family. Interacts with MTB, FIP37 and HAKAI. Associates with MTA, MTB, FIP37 and HAKAI to form the m6A writer complex which is essential for adenosine methylation at specific mRNA sequences.

The protein resides in the nucleus speckle. The protein localises to the nucleus. It localises to the nucleoplasm. Subunit of the N6-methyltransferase complex, a multiprotein complex that mediates N6-methyladenosine (m6A) methylation at the 5'-[AG]GAC-3' consensus sites of some mRNAs. Associates with MTA, MTB, FIP37 and HAKAI to form the m6A writer complex which is essential for adenosine methylation at specific mRNA sequences. N6-methyladenosine (m6A) plays a role in mRNA stability, processing, translation efficiency and editing. This chain is Protein virilizer homolog, found in Arabidopsis thaliana (Mouse-ear cress).